Consider the following 188-residue polypeptide: MVKSQPILRYILRGIPAIAVAVLLSACSANNTAKNMHPETRAVGSETSSLQASQDEFENLVRNVDVKSRIMDQYADWKGVRYRLGGSTKKGIDCSGFVQRTFREQFGLELPRSTYEQQEMGKSVSRSNLRTGDLVLFRAGSTGRHVGIYIGNNQFVHASTSSGVIISSMNEPYWKKRYNEARRVLSRS.

Residues Met-1–Ala-26 form the signal peptide. Cys-27 carries N-palmitoyl cysteine lipidation. Residue Cys-27 is the site of S-diacylglycerol cysteine attachment. In terms of domain architecture, NlpC/P60 spans Val-64–Leu-185. Catalysis depends on Cys-94, which acts as the Nucleophile. The active-site Proton acceptor is the His-145. Residue His-157 is part of the active site.

Belongs to the peptidase C40 family. In terms of assembly, monomer.

The protein localises to the cell outer membrane. It carries out the reaction N-acetyl-D-glucosaminyl-N-acetylmuramoyl-L-alanyl-meso-2,6-diaminoheptanedioyl-D-alanine + H2O = N-acetyl-D-glucosaminyl-N-acetylmuramoyl-L-alanyl-meso-2,6-diaminoheptanedioate + D-alanine. It functions in the pathway cell wall biogenesis; cell wall polysaccharide biosynthesis. Its function is as follows. A murein DD-endopeptidase with specificity for D-Ala-meso-diaminopimelic acid (mDAP) cross-links. Its role is probably to cleave D-Ala-mDAP cross-links to allow insertion of new glycans and thus cell wall expansion. Functionally redundant with MepM and MepH. Also has weak LD-carboxypeptidase activity on L-mDAP-D-Ala peptide bonds. This chain is Murein DD-endopeptidase MepS/Murein LD-carboxypeptidase (mepS), found in Escherichia coli O157:H7.